Reading from the N-terminus, the 262-residue chain is Indole-3-glycerol phosphate synthase (262 aa).

The protein belongs to the TrpC family.

The catalysed reaction is 1-(2-carboxyphenylamino)-1-deoxy-D-ribulose 5-phosphate + H(+) = (1S,2R)-1-C-(indol-3-yl)glycerol 3-phosphate + CO2 + H2O. It participates in amino-acid biosynthesis; L-tryptophan biosynthesis; L-tryptophan from chorismate: step 4/5. The polypeptide is Indole-3-glycerol phosphate synthase (Bordetella avium (strain 197N)).